The sequence spans 100 residues: Urease subunit gamma (100 aa).

The protein belongs to the urease gamma subunit family. As to quaternary structure, heterotrimer of UreA (gamma), UreB (beta) and UreC (alpha) subunits. Three heterotrimers associate to form the active enzyme.

It localises to the cytoplasm. It carries out the reaction urea + 2 H2O + H(+) = hydrogencarbonate + 2 NH4(+). Its pathway is nitrogen metabolism; urea degradation; CO(2) and NH(3) from urea (urease route): step 1/1. The polypeptide is Urease subunit gamma (Pseudoalteromonas translucida (strain TAC 125)).